Consider the following 163-residue polypeptide: Probable ribosome biogenesis protein RLP24 (163 aa).

Belongs to the eukaryotic ribosomal protein eL24 family. Associated with nucleolar and cytoplasmic pre-60S particles. At the end of biogenesis it dissociates from cytoplasmic pre-60S particles and is likely to be exchanged for its ribosomal homolog, RPL24.

It is found in the nucleus. The protein resides in the nucleolus. Its function is as follows. Involved in the biogenesis of the 60S ribosomal subunit. Ensures the docking of GTPBP4/NOG1 to pre-60S particles. This is Probable ribosome biogenesis protein RLP24 (RSL24D1) from Pongo abelii (Sumatran orangutan).